Consider the following 388-residue polypeptide: Formate-dependent phosphoribosylglycinamide formyltransferase (388 aa).

N(1)-(5-phospho-beta-D-ribosyl)glycinamide contacts are provided by residues 20–21 (EL) and Glu80. Residues Arg112, Lys153, 158–163 (SSGKGQ), 193–196 (EEFI), and Glu201 each bind ATP. The ATP-grasp domain maps to 117 to 306 (RLAFEKLGLR…EFEIHARAIL (190 aa)). The Mg(2+) site is built by Glu265 and Glu277. Residues Asp284, Lys352, and 359 to 360 (RR) each bind N(1)-(5-phospho-beta-D-ribosyl)glycinamide.

The protein belongs to the PurK/PurT family. Homodimer.

The enzyme catalyses N(1)-(5-phospho-beta-D-ribosyl)glycinamide + formate + ATP = N(2)-formyl-N(1)-(5-phospho-beta-D-ribosyl)glycinamide + ADP + phosphate + H(+). It participates in purine metabolism; IMP biosynthesis via de novo pathway; N(2)-formyl-N(1)-(5-phospho-D-ribosyl)glycinamide from N(1)-(5-phospho-D-ribosyl)glycinamide (formate route): step 1/1. Its function is as follows. Involved in the de novo purine biosynthesis. Catalyzes the transfer of formate to 5-phospho-ribosyl-glycinamide (GAR), producing 5-phospho-ribosyl-N-formylglycinamide (FGAR). Formate is provided by PurU via hydrolysis of 10-formyl-tetrahydrofolate. The chain is Formate-dependent phosphoribosylglycinamide formyltransferase from Methanococcus maripaludis (strain C5 / ATCC BAA-1333).